The sequence spans 383 residues: Dephospho-CoA kinase (383 aa).

In terms of domain architecture, DPCK spans 3-201 (RIGLTGGMGA…RRLVPFERNL (199 aa)). 11-16 (GAGKST) contacts ATP. A UPF0157 region spans residues 196–383 (PFERNLRAAT…EVAERLLGTV (188 aa)).

The protein in the N-terminal section; belongs to the CoaE family. In the C-terminal section; belongs to the UPF0157 (GrpB) family.

It localises to the cytoplasm. It catalyses the reaction 3'-dephospho-CoA + ATP = ADP + CoA + H(+). It functions in the pathway cofactor biosynthesis; coenzyme A biosynthesis; CoA from (R)-pantothenate: step 5/5. Functionally, catalyzes the phosphorylation of the 3'-hydroxyl group of dephosphocoenzyme A to form coenzyme A. This Nocardia farcinica (strain IFM 10152) protein is Dephospho-CoA kinase.